We begin with the raw amino-acid sequence, 256 residues long: Acetoacetate decarboxylase 3 (256 aa).

Catalysis depends on K110, which acts as the Schiff-base intermediate with acetoacetate.

This sequence belongs to the ADC family.

It catalyses the reaction acetoacetate + H(+) = acetone + CO2. Its function is as follows. Catalyzes the conversion of acetoacetate to acetone and carbon dioxide. The chain is Acetoacetate decarboxylase 3 from Mesorhizobium japonicum (strain LMG 29417 / CECT 9101 / MAFF 303099) (Mesorhizobium loti (strain MAFF 303099)).